The following is a 145-amino-acid chain: MRSEKHLLPLPLLLAICCLGTLHLSSGFPQSVPSYLEGLDIPESERHAFCFSQWTALQDQEQIPSFVMDLCSSIYNRMKVNEENNHEIYKRFLFQFSRAKDPSLKIGESQIATAEYTKRDSSGIVGRPFFLFRPRNGRKVSINEH.

The first 27 residues, 1–27 (MRSEKHLLPLPLLLAICCLGTLHLSSG), serve as a signal peptide directing secretion. Propeptides lie at residues 28–89 (FPQS…HEIY) and 92–117 (FLFQFSRAKDPSLKIGESQIATAEYT). Asparagine amide is present on N136. A propeptide spanning residues 140–145 (VSINEH) is cleaved from the precursor.

The protein belongs to the NmU family. Expressed by the skin glands.

The protein resides in the secreted. Stimulates uterine smooth muscle contraction (EC(50)=1.6 nM). Synthetic peptide NmS-17 induces calcium mobilization in CHO cells transfected with either human FM-3/GPR66 (EC(50)=0.085 nM) or FM-4/TGR-1 (EC(50)=0.231 nM) NmU/NmS receptors. The protein is Neuromedin-S (nms) of Bombina maxima (Giant fire-bellied toad).